A 344-amino-acid chain; its full sequence is Tripartite motif-containing protein 44 (344 aa).

Disordered regions lie at residues 1-25 and 66-165; these read MASGVGAAFEELPHDGTCDECEPDE and AWTP…EFDP. Basic and acidic residues predominate over residues 75–92; sequence GAGKEEAEVKVEQEREIE. Residues 93 to 165 are compositionally biased toward acidic residues; it reads SEAGEESESE…ETEAESEFDP (73 aa). The B box-type zinc finger occupies 174–215; sequence VAKRKCPDHGLDLSTYCQEDRQLICVLCPVIGAHQGHQLSTL. Zn(2+) is bound by residues C179, H182, C201, and H207. Residues 290–325 are a coiled coil; that stretch reads AHVTEILADIQSHMDRLMTQMAQAKEQLDTSNESAE. The interval 309–344 is disordered; the sequence is QMAQAKEQLDTSNESAEPKAEGDEEGPSGASEEEDT. A compositionally biased stretch (acidic residues) spans 330–344; sequence GDEEGPSGASEEEDT. Residues S336 and S339 each carry the phosphoserine modification.

As to quaternary structure, interacts (via coiled coil) with TRIM17 (via coiled coil). In terms of tissue distribution, highly expressed in testis.

Its function is as follows. May play a role in the process of differentiation and maturation of neuronal cells. May regulate the activity of TRIM17. Is a negative regulator of PAX6 expression. The sequence is that of Tripartite motif-containing protein 44 (TRIM44) from Homo sapiens (Human).